A 367-amino-acid polypeptide reads, in one-letter code: Otolith matrix protein 1 (367 aa).

A signal peptide spans 1–23 (MDRLDRRLAATLLLFSFISFSTQ). One can recognise a Transferrin-like domain in the interval 27-363 (ISWCVVSEAE…YTTVLQAFEC (337 aa)).

Belongs to the transferrin family. In terms of assembly, interacts with OTOL1. In terms of tissue distribution, expressed in the sacculus during the day.

The protein localises to the secreted. Functionally, required for normal otolith growth and deposition of otolin-1 in the otolith. This is Otolith matrix protein 1 (otomp) from Oncorhynchus mykiss (Rainbow trout).